Consider the following 363-residue polypeptide: 3-isopropylmalate dehydrogenase (363 aa).

Position 78-91 (Gly78–Glu91) interacts with NAD(+). Residues Arg99, Arg109, Arg138, and Asp227 each contribute to the substrate site. Mg(2+) is bound by residues Asp227, Asp251, and Asp255. Gly285–Asn297 lines the NAD(+) pocket.

Belongs to the isocitrate and isopropylmalate dehydrogenases family. LeuB type 1 subfamily. In terms of assembly, homodimer. The cofactor is Mg(2+). Requires Mn(2+) as cofactor.

It is found in the cytoplasm. The catalysed reaction is (2R,3S)-3-isopropylmalate + NAD(+) = 4-methyl-2-oxopentanoate + CO2 + NADH. It functions in the pathway amino-acid biosynthesis; L-leucine biosynthesis; L-leucine from 3-methyl-2-oxobutanoate: step 3/4. In terms of biological role, catalyzes the oxidation of 3-carboxy-2-hydroxy-4-methylpentanoate (3-isopropylmalate) to 3-carboxy-4-methyl-2-oxopentanoate. The product decarboxylates to 4-methyl-2 oxopentanoate. The protein is 3-isopropylmalate dehydrogenase of Buchnera aphidicola subsp. Diuraphis noxia.